A 144-amino-acid polypeptide reads, in one-letter code: Probable calcium-binding protein CML31 (144 aa).

EF-hand domains follow at residues 1-31 (MAEI…FSPQ), 32-67 (ITSE…NGGG), 72-107 (EEEV…LGEK), and 108-143 (HTME…NKES). Ca(2+)-binding residues include Asp45, Asp47, Asp49, Gln51, Glu56, Asp85, Asp87, Asp89, Lys91, Glu96, Asp121, Asp123, Asp125, and Glu132.

In terms of biological role, potential calcium sensor. This chain is Probable calcium-binding protein CML31 (CML31), found in Arabidopsis thaliana (Mouse-ear cress).